We begin with the raw amino-acid sequence, 252 residues long: Aspartate/glutamate leucyltransferase (252 aa).

This sequence belongs to the R-transferase family. Bpt subfamily.

It localises to the cytoplasm. It carries out the reaction N-terminal L-glutamyl-[protein] + L-leucyl-tRNA(Leu) = N-terminal L-leucyl-L-glutamyl-[protein] + tRNA(Leu) + H(+). It catalyses the reaction N-terminal L-aspartyl-[protein] + L-leucyl-tRNA(Leu) = N-terminal L-leucyl-L-aspartyl-[protein] + tRNA(Leu) + H(+). Its function is as follows. Functions in the N-end rule pathway of protein degradation where it conjugates Leu from its aminoacyl-tRNA to the N-termini of proteins containing an N-terminal aspartate or glutamate. This chain is Aspartate/glutamate leucyltransferase, found in Afipia carboxidovorans (strain ATCC 49405 / DSM 1227 / KCTC 32145 / OM5) (Oligotropha carboxidovorans).